A 183-amino-acid polypeptide reads, in one-letter code: Dual-action ribosomal maturation protein DarP (183 aa).

It belongs to the DarP family.

Its subcellular location is the cytoplasm. In terms of biological role, member of a network of 50S ribosomal subunit biogenesis factors which assembles along the 30S-50S interface, preventing incorrect 23S rRNA structures from forming. Promotes peptidyl transferase center (PTC) maturation. The polypeptide is Dual-action ribosomal maturation protein DarP (Klebsiella pneumoniae (strain 342)).